The primary structure comprises 1238 residues: Multifunctional 2-oxoglutarate metabolism enzyme (1238 aa).

A 2-oxoglutarate dehydrogenase E1, N-terminal part region spans residues 1–41 (MANISSPFGQNEWLVEEMYRKFRDDPSSVDPSWHEFLVDYN). The segment at 42–97 (PESTAEPVLTDPTSTDKQPSATPQAKPAAAADPVASRAKPATTPTVANGTAAGSAA) is linker. The disordered stretch occupies residues 44-108 (STAEPVLTDP…PAKTTTTPPI (65 aa)). The span at 59 to 107 (QPSATPQAKPAAAADPVASRAKPATTPTVANGTAAGSAAAPAKTTTTPP) shows a compositional bias: low complexity. The succinyltransferase E2 stretch occupies residues 98-346 (APAKTTTTPP…LRTIHEMVLS (249 aa)). The Proton acceptor; for succinyltransferase activity role is filled by histidine 325. The tract at residues 347 to 1238 (DSFWDEIFRE…QQEILDTAFG (892 aa)) is 2-oxoglutarate dehydrogenase E1, C-terminal part. Residue arginine 551 participates in thiamine diphosphate binding. 2 residues coordinate 2-oxoglutarate: histidine 590 and serine 615. Thiamine diphosphate is bound by residues serine 615, leucine 617, aspartate 657, alanine 658, alanine 659, and asparagine 690. Residue aspartate 657 participates in Mg(2+) binding. Positions 690 and 692 each coordinate Mg(2+). Residues 795 to 825 (DISLKEAEDALRDYQGQLERVFNEVRDLEKH) adopt a coiled-coil conformation. Residue histidine 1032 participates in 2-oxoglutarate binding. Threonine 1050, arginine 1066, lysine 1101, serine 1104, glutamine 1154, arginine 1161, and arginine 1162 together coordinate acetyl-CoA.

Belongs to the 2-oxoacid dehydrogenase family. Kgd subfamily. In terms of assembly, homodimer. The 2-oxoglutarate dehydrogenase (ODH) complex contains multiple copies of three enzymatic components: 2-oxoglutarate dehydrogenase (E1), dihydrolipoamide succinyltransferase (E2) and lipoamide dehydrogenase (E3). The cofactor is Mg(2+). It depends on thiamine diphosphate as a cofactor.

The enzyme catalyses glyoxylate + 2-oxoglutarate + H(+) = 2-hydroxy-3-oxoadipate + CO2. It catalyses the reaction 2-oxoglutarate + H(+) = succinate semialdehyde + CO2. The catalysed reaction is N(6)-[(R)-lipoyl]-L-lysyl-[protein] + 2-oxoglutarate + H(+) = N(6)-[(R)-S(8)-succinyldihydrolipoyl]-L-lysyl-[protein] + CO2. It carries out the reaction N(6)-[(R)-dihydrolipoyl]-L-lysyl-[protein] + succinyl-CoA = N(6)-[(R)-S(8)-succinyldihydrolipoyl]-L-lysyl-[protein] + CoA. It functions in the pathway carbohydrate metabolism; tricarboxylic acid cycle; succinate from 2-oxoglutarate (transferase route): step 1/2. The protein operates within carbohydrate metabolism; tricarboxylic acid cycle; succinyl-CoA from 2-oxoglutarate (dehydrogenase route): step 1/1. Its activity is regulated as follows. Alpha-ketoglutarate dehydrogenase and decarboxylase activities are inhibited by unphosphorylated GarA, and allosterically activated by acetyl-CoA, the main substrate of the TCA cycle. Its function is as follows. Shows three enzymatic activities that share a first common step, the attack of thiamine-PP on 2-oxoglutarate (alpha-ketoglutarate, KG), leading to the formation of an enamine-thiamine-PP intermediate upon decarboxylation. Thus, displays KGD activity, catalyzing the decarboxylation from five-carbon 2-oxoglutarate to four-carbon succinate semialdehyde (SSA). Also catalyzes C-C bond formation between the activated aldehyde formed after decarboxylation of alpha-ketoglutarate and the carbonyl of glyoxylate (GLX), to yield 2-hydroxy-3-oxoadipate (HOA), which spontaneously decarboxylates to form 5-hydroxylevulinate (HLA). And is also a component of the 2-oxoglutarate dehydrogenase (ODH) complex, that catalyzes the overall conversion of 2-oxoglutarate to succinyl-CoA and CO(2). The KG decarboxylase and KG dehydrogenase reactions provide two alternative, tightly regulated, pathways connecting the oxidative and reductive branches of the TCA cycle. The chain is Multifunctional 2-oxoglutarate metabolism enzyme (kgd) from Mycobacterium leprae (strain TN).